A 355-amino-acid polypeptide reads, in one-letter code: Probable butyrate kinase (355 aa).

Belongs to the acetokinase family.

The protein localises to the cytoplasm. The catalysed reaction is butanoate + ATP = butanoyl phosphate + ADP. This chain is Probable butyrate kinase, found in Listeria welshimeri serovar 6b (strain ATCC 35897 / DSM 20650 / CCUG 15529 / CIP 8149 / NCTC 11857 / SLCC 5334 / V8).